Reading from the N-terminus, the 458-residue chain is MVNLRKAVHSFLVHLIGLLVWQCDISVSPVAALVTDIFNTSDGGRFKFPDGVQNWPALSIVIIIILTIGGNILVIMAVSLEKKLHNATNYFLMSLAIADMLVGLLVMPLSLLAILYDYVWPLPRYLCPVWISLDVLFSTASIMHLCAISLDRYVAIRNPVEHSRFNSRTKAIMKIAIVWAISIGVSVPIPVIGLRDEEKVFVNNTTCVLNDPNFVLIGSFVAFFIPLTIMVITYCLTIHVLRRQALMLLHGHVEEPPRINLDFLKCCRRNGTEEENSANPNQDSNPRRRKKKERRPRGTMQAINNERKASKVLGIVFFVFLVMWCPFFITNILSVLCGKACNQKLMEKLLNVFVWIGYVCSGINPLVYTLFNKIYRRAFSNYLRCNYKPEKKPPVRQMPRVAATALSGRELNVNIYRHTNEPVLKKANDKEPGIEMQVENLELPVNPSSVVSERISSV.

An N-terminal signal peptide occupies residues 1-32 (MVNLRKAVHSFLVHLIGLLVWQCDISVSPVAA). Topologically, residues 33–55 (LVTDIFNTSDGGRFKFPDGVQNW) are extracellular. The helical transmembrane segment at 56-80 (PALSIVIIIILTIGGNILVIMAVSL) threads the bilayer. At 81–86 (EKKLHN) the chain is on the cytoplasmic side. A helical transmembrane segment spans residues 87-111 (ATNYFLMSLAIADMLVGLLVMPLSL). Residues 112-128 (LAILYDYVWPLPRYLCP) are Extracellular-facing. Residues C127 and C207 are joined by a disulfide bond. The chain crosses the membrane as a helical span at residues 129–151 (VWISLDVLFSTASIMHLCAISLD). An ergotamine-binding site is contributed by T139. Residues 151–153 (DRY) carry the DRY motif; important for ligand-induced conformation changes motif. Residues 152–167 (RYVAIRNPVEHSRFNS) lie on the Cytoplasmic side of the membrane. The chain crosses the membrane as a helical span at residues 168-189 (RTKAIMKIAIVWAISIGVSVPI). Residues 190–213 (PVIGLRDEEKVFVNNTTCVLNDPN) are Extracellular-facing. N-linked (GlcNAc...) asparagine glycosylation is found at N203 and N204. Position 209 (L209) interacts with ergotamine. The helical transmembrane segment at 214-236 (FVLIGSFVAFFIPLTIMVITYCL) threads the bilayer. At 237 to 311 (TIHVLRRQAL…AINNERKASK (75 aa)) the chain is on the cytoplasmic side. Positions 272 to 301 (TEEENSANPNQDSNPRRRKKKERRPRGTMQ) are disordered. Residues 287–297 (RRRKKKERRPR) are compositionally biased toward basic residues. The helical transmembrane segment at 312 to 336 (VLGIVFFVFLVMWCPFFITNILSVL) threads the bilayer. C337 and C341 are joined by a disulfide. The Extracellular portion of the chain corresponds to 337 to 347 (CGKACNQKLME). The chain crosses the membrane as a helical span at residues 348 to 370 (KLLNVFVWIGYVCSGINPLVYTL). Positions 364 to 368 (NPLVY) match the NPxxY motif; important for ligand-induced conformation changes and signaling motif. The Cytoplasmic segment spans residues 371–458 (FNKIYRRAFS…SVVSERISSV (88 aa)). A PDZ-binding motif is present at residues 456-458 (SSV).

This sequence belongs to the G-protein coupled receptor 1 family. As to quaternary structure, interacts with MPDZ. Interacts with ARRB2. Interacts with MPP3; this interaction stabilizes the receptor at the plasma membrane and prevents the desensitization of the HTR2C receptor-mediated calcium response.

The protein resides in the cell membrane. G-protein coupled receptor for 5-hydroxytryptamine (serotonin). Also functions as a receptor for various drugs and psychoactive substances, including ergot alkaloid derivatives, 1-2,5,-dimethoxy-4-iodophenyl-2-aminopropane (DOI) and lysergic acid diethylamide (LSD). Ligand binding causes a conformation change that triggers signaling via guanine nucleotide-binding proteins (G proteins) and modulates the activity of downstream effectors. HTR2C is coupled to G(q)/G(11) G alpha proteins and activates phospholipase C-beta, releasing diacylglycerol (DAG) and inositol 1,4,5-trisphosphate (IP3) second messengers that modulate the activity of phosphatidylinositol 3-kinase and promote the release of Ca(2+) ions from intracellular stores, respectively. Beta-arrestin family members inhibit signaling via G proteins and mediate activation of alternative signaling pathways. Regulates neuronal activity via the activation of short transient receptor potential calcium channels in the brain, and thereby modulates the activation of pro-opiomelanocortin neurons and the release of CRH that then regulates the release of corticosterone. Plays a role in the regulation of appetite and eating behavior, responses to anxiogenic stimuli and stress. Plays a role in insulin sensitivity and glucose homeostasis. This Canis lupus familiaris (Dog) protein is 5-hydroxytryptamine receptor 2C.